The sequence spans 283 residues: MAAITAALIKQVREDTGAGMLDVKKALTEAEGDVARAKEIIRAKGIAAAGKREGRKAQEGTIASKVVETANGETGYAVELNSETDFVAKTPKFVEFTEEVLGYAVDADANSADELLEAKAGDTTVKLAVEEAAALFGEHVKVGQFAKISGEHVEVYAHKKSAEMPPSIVAMIATDKAGAAVAHEAALQISAMGAKWLTREDVPADVVESERRVATEKSLAEGKPEKIVPKIVEGRLNAFFKEVVLLEQPFVKDPSKTVGDLFKEVGGNATAFARVEVGKGEEE.

Positions 84–87 are involved in Mg(2+) ion dislocation from EF-Tu; the sequence is TDFV.

It belongs to the EF-Ts family.

The protein resides in the cytoplasm. Its function is as follows. Associates with the EF-Tu.GDP complex and induces the exchange of GDP to GTP. It remains bound to the aminoacyl-tRNA.EF-Tu.GTP complex up to the GTP hydrolysis stage on the ribosome. This chain is Elongation factor Ts, found in Bifidobacterium longum (strain DJO10A).